Reading from the N-terminus, the 360-residue chain is Cysteine proteinase 2 (360 aa).

Positions 1 to 19 (MVPRRLFVLAVVVLADTAA) are cleaved as a signal peptide. The propeptide at 20–142 (VVNSGFADSN…NHRMRAAAVA (123 aa)) is activation peptide. Residue Asn-125 is glycosylated (N-linked (GlcNAc...) asparagine). 2 disulfide bridges follow: Cys-164/Cys-207 and Cys-198/Cys-240. Cys-167 is an active-site residue. A glycan (N-linked (GlcNAc...) asparagine) is linked at Asn-256. An intrachain disulfide couples Cys-298 to Cys-348. Active-site residues include His-307 and Asn-327.

This sequence belongs to the peptidase C1 family. As to expression, expressed at the onset of germination.

It is found in the vacuole. In terms of biological role, involved in the degradation of the storage protein zein. May play a role in proteolysis during emergencies. This chain is Cysteine proteinase 2 (CCP2), found in Zea mays (Maize).